Consider the following 295-residue polypeptide: UDP-N-acetylenolpyruvoylglucosamine reductase (295 aa).

The region spanning 23-188 (KVGGPADFLA…ISAKFALKPG (166 aa)) is the FAD-binding PCMH-type domain. Arginine 167 is an active-site residue. Residue serine 217 is the Proton donor of the active site. Glutamate 287 is an active-site residue.

It belongs to the MurB family. FAD serves as cofactor.

The protein localises to the cytoplasm. The enzyme catalyses UDP-N-acetyl-alpha-D-muramate + NADP(+) = UDP-N-acetyl-3-O-(1-carboxyvinyl)-alpha-D-glucosamine + NADPH + H(+). It functions in the pathway cell wall biogenesis; peptidoglycan biosynthesis. Cell wall formation. The sequence is that of UDP-N-acetylenolpyruvoylglucosamine reductase from Streptococcus pyogenes serotype M3 (strain ATCC BAA-595 / MGAS315).